We begin with the raw amino-acid sequence, 270 residues long: uncharacterized protein (270 aa).

Residues 1–10 are compositionally biased toward basic and acidic residues; the sequence is MFGLKVKDAT. 2 disordered regions span residues 1–115 and 215–236; these read MFGL…PTPW and QTGF…QGEQ. Low complexity-rich tracts occupy residues 26 to 41 and 98 to 113; these read SSSS…TQRG and GTSP…GTPT.

It belongs to the adhesin P1 family.

This is an uncharacterized protein from Mycoplasma pneumoniae (strain ATCC 29342 / M129 / Subtype 1) (Mycoplasmoides pneumoniae).